The sequence spans 748 residues: Cysteine--tRNA ligase, cytoplasmic (748 aa).

The segment at 1–25 (MAAAPAEQGKGKRVQPPWSPPEGTK) is disordered. C55 contacts Zn(2+). G56 serves as a coordination point for L-cysteine. Positions 57-67 (PTVYDASHMGH) match the 'HIGH' region motif. L-cysteine is bound at residue T96. Residues 101–104 (KIIK) carry the 'KIIK' region motif. Zn(2+) is bound by residues C348, H373, and E377. Residue H373 coordinates L-cysteine. The 'KMSKS' region signature appears at 406–410 (KMSKS). Residue K409 participates in ATP binding. Composition is skewed to basic and acidic residues over residues 656–679 (KIEEEKKRKKEEAARKKQEQEAAK) and 686–717 (PPHEMFKSEHDKYSKFDENGFPTHDTEGKELS). Residues 656–719 (KIEEEKKRKK…DTEGKELSKG (64 aa)) are disordered.

It belongs to the class-I aminoacyl-tRNA synthetase family. As to quaternary structure, homodimer. It depends on Zn(2+) as a cofactor.

The protein localises to the cytoplasm. It catalyses the reaction tRNA(Cys) + L-cysteine + ATP = L-cysteinyl-tRNA(Cys) + AMP + diphosphate. Its function is as follows. Catalyzes the ATP-dependent ligation of cysteine to tRNA(Cys). The chain is Cysteine--tRNA ligase, cytoplasmic (CARS1) from Gallus gallus (Chicken).